The sequence spans 359 residues: Guanine nucleotide-binding protein G(q) subunit alpha (359 aa).

S-palmitoyl cysteine attachment occurs at residues C9 and C10. In terms of domain architecture, G-alpha spans 38 to 359; sequence RELKLLLLGT…QLNLKEYNLV (322 aa). A G1 motif region spans residues 41 to 54; the sequence is KLLLLGTGESGKST. Residues S50, G51, K52, S53, T54, S156, L180, R181, and R183 each contribute to the GTP site. S53 is a binding site for Mg(2+). Residues 178–186 form a G2 motif region; sequence DVLRVRVPT. A Mg(2+)-binding site is contributed by T186. The tract at residues 201–210 is G3 motif; that stretch reads FRMVDVGGQR. Position 209 is a 5-glutamyl histamine (Q209). A G4 motif region spans residues 270-277; it reads ILFLNKKD. GTP-binding residues include N274, K275, D277, and A331. Residues 329 to 334 are G5 motif; the sequence is TCATDT.

Belongs to the G-alpha family. G(q) subfamily. In terms of assembly, g proteins are composed of 3 units; alpha, beta and gamma. The alpha chain contains the guanine nucleotide binding site. Interacts (GDP-bound form) with RIC8A (via C-terminus); promoting GNAQ folding and association with the plasma membrane. Binds NHERF1. Forms a complex with PECAM1 and BDKRB2. Interacts with GAS2L2. Post-translationally, palmitoylated by ZDHHC3 and ZDHHC7. Palmitoylation occurs in the Golgi and participates in the localization of GNAQ to the plasma membrane. Histaminylated at Gln-209 residues by TGM2.

The protein localises to the cell membrane. Its subcellular location is the golgi apparatus. The protein resides in the nucleus. It localises to the nucleus membrane. The catalysed reaction is GTP + H2O = GDP + phosphate + H(+). Functionally, guanine nucleotide-binding proteins (G proteins) function as transducers downstream of G protein-coupled receptors (GPCRs) in numerous signaling cascades. The alpha chain contains the guanine nucleotide binding site and alternates between an active, GTP-bound state and an inactive, GDP-bound state. Signaling by an activated GPCR promotes GDP release and GTP binding. The alpha subunit has a low GTPase activity that converts bound GTP to GDP, thereby terminating the signal. Both GDP release and GTP hydrolysis are modulated by numerous regulatory proteins. Signaling is mediated via phospholipase C-beta-dependent inositol lipid hydrolysis for signal propagation: activates phospholipase C-beta: following GPCR activation, GNAQ activates PLC-beta (PLCB1, PLCB2, PLCB3 or PLCB4), leading to production of diacylglycerol (DAG) and inositol 1,4,5-trisphosphate (IP3). Required for platelet activation. Regulates B-cell selection and survival and is required to prevent B-cell-dependent autoimmunity. Regulates chemotaxis of BM-derived neutrophils and dendritic cells (in vitro). Transduces FFAR4 signaling in response to long-chain fatty acids (LCFAs). Together with GNA11, required for heart development. This chain is Guanine nucleotide-binding protein G(q) subunit alpha (GNAQ), found in Canis lupus familiaris (Dog).